A 61-amino-acid polypeptide reads, in one-letter code: Small ribosomal subunit protein uS14B (61 aa).

Cysteine 24, cysteine 27, cysteine 40, and cysteine 43 together coordinate Zn(2+).

Belongs to the universal ribosomal protein uS14 family. Zinc-binding uS14 subfamily. In terms of assembly, part of the 30S ribosomal subunit. Contacts proteins S3 and S10. It depends on Zn(2+) as a cofactor.

In terms of biological role, binds 16S rRNA, required for the assembly of 30S particles and may also be responsible for determining the conformation of the 16S rRNA at the A site. This chain is Small ribosomal subunit protein uS14B, found in Bacillus licheniformis (strain ATCC 14580 / DSM 13 / JCM 2505 / CCUG 7422 / NBRC 12200 / NCIMB 9375 / NCTC 10341 / NRRL NRS-1264 / Gibson 46).